Consider the following 220-residue polypeptide: 2-hydroxy-3-keto-5-methylthiopentenyl-1-phosphate phosphatase (220 aa).

The protein belongs to the HAD-like hydrolase superfamily. MtnX family.

It catalyses the reaction 2-hydroxy-5-methylsulfanyl-3-oxopent-1-enyl phosphate + H2O = 1,2-dihydroxy-5-(methylsulfanyl)pent-1-en-3-one + phosphate. Its pathway is amino-acid biosynthesis; L-methionine biosynthesis via salvage pathway; L-methionine from S-methyl-5-thio-alpha-D-ribose 1-phosphate: step 4/6. Its function is as follows. Dephosphorylates 2-hydroxy-3-keto-5-methylthiopentenyl-1-phosphate (HK-MTPenyl-1-P) yielding 1,2-dihydroxy-3-keto-5-methylthiopentene (DHK-MTPene). The protein is 2-hydroxy-3-keto-5-methylthiopentenyl-1-phosphate phosphatase of Geobacillus kaustophilus (strain HTA426).